The primary structure comprises 417 residues: Cytochrome b-c1 complex subunit 2, mitochondrial (417 aa).

The N-terminal 22 residues, 1–22 (MTRGVPRLAVAARHFSTAEAAG), are a transit peptide targeting the mitochondrion.

This sequence belongs to the peptidase M16 family. UQCRC2/QCR2 subfamily. As to quaternary structure, component of the ubiquinol-cytochrome c oxidoreductase (cytochrome b-c1 complex, complex III, CIII), a multisubunit enzyme composed of 3 respiratory subunits cytochrome b, cytochrome c1 and Rieske protein, 2 core protein subunits, and additional low-molecular weight protein subunits. The complex exists as an obligatory dimer and forms supercomplexes (SCs) in the inner mitochondrial membrane with cytochrome c oxidase (complex IV, CIV).

The protein resides in the mitochondrion inner membrane. Functionally, component of the ubiquinol-cytochrome c oxidoreductase, a multisubunit transmembrane complex that is part of the mitochondrial electron transport chain which drives oxidative phosphorylation. The respiratory chain contains 3 multisubunit complexes succinate dehydrogenase (complex II, CII), ubiquinol-cytochrome c oxidoreductase (cytochrome b-c1 complex, complex III, CIII) and cytochrome c oxidase (complex IV, CIV), that cooperate to transfer electrons derived from NADH and succinate to molecular oxygen, creating an electrochemical gradient over the inner membrane that drives transmembrane transport and the ATP synthase. The cytochrome b-c1 complex catalyzes electron transfer from ubiquinol to cytochrome c, linking this redox reaction to translocation of protons across the mitochondrial inner membrane, with protons being carried across the membrane as hydrogens on the quinol. In the process called Q cycle, 2 protons are consumed from the matrix, 4 protons are released into the intermembrane space and 2 electrons are passed to cytochrome c. This Yarrowia lipolytica (strain CLIB 122 / E 150) (Yeast) protein is Cytochrome b-c1 complex subunit 2, mitochondrial (QCR2).